Reading from the N-terminus, the 273-residue chain is Aliphatic sulfonates import ATP-binding protein SsuB 2 (273 aa).

The ABC transporter domain maps to leucine 17–alanine 241. Glycine 50–serine 57 is an ATP binding site.

This sequence belongs to the ABC transporter superfamily. Aliphatic sulfonates importer (TC 3.A.1.17.2) family. The complex is composed of two ATP-binding proteins (SsuB), two transmembrane proteins (SsuC) and a solute-binding protein (SsuA).

It is found in the cell inner membrane. The enzyme catalyses ATP + H2O + aliphatic sulfonate-[sulfonate-binding protein]Side 1 = ADP + phosphate + aliphatic sulfonateSide 2 + [sulfonate-binding protein]Side 1.. In terms of biological role, part of the ABC transporter complex SsuABC involved in aliphatic sulfonates import. Responsible for energy coupling to the transport system. The protein is Aliphatic sulfonates import ATP-binding protein SsuB 2 of Burkholderia lata (strain ATCC 17760 / DSM 23089 / LMG 22485 / NCIMB 9086 / R18194 / 383).